The sequence spans 328 residues: Probable voltage-gated potassium channel subunit beta (328 aa).

NADP(+)-binding residues include Trp21, Gln27, and Asp49. Tyr54 functions as the Proton donor/acceptor in the catalytic mechanism. Ser152, Gln178, Trp207, Ser208, Pro209, Leu210, Ala211, Lys218, Arg229, Gly285, Thr287, Gln291, Glu294, and Asn295 together coordinate NADP(+).

The protein belongs to the shaker potassium channel beta subunit family. In terms of assembly, forms heteromultimeric complexes with potassium channel alpha subunits. In terms of tissue distribution, expressed in late-developed leaves with the highest expression in the flag leaf (at protein level).

Its function is as follows. Probable accessory potassium channel protein which modulates the activity of the pore-forming alpha subunit. In Oryza sativa subsp. japonica (Rice), this protein is Probable voltage-gated potassium channel subunit beta (KOB1).